A 238-amino-acid chain; its full sequence is Uracil-DNA glycosylase (238 aa).

The Proton acceptor role is filled by D72.

The protein belongs to the uracil-DNA glycosylase (UDG) superfamily. UNG family.

It localises to the cytoplasm. It catalyses the reaction Hydrolyzes single-stranded DNA or mismatched double-stranded DNA and polynucleotides, releasing free uracil.. Functionally, excises uracil residues from the DNA which can arise as a result of misincorporation of dUMP residues by DNA polymerase or due to deamination of cytosine. This is Uracil-DNA glycosylase from Chromobacterium violaceum (strain ATCC 12472 / DSM 30191 / JCM 1249 / CCUG 213 / NBRC 12614 / NCIMB 9131 / NCTC 9757 / MK).